We begin with the raw amino-acid sequence, 182 residues long: ATP-dependent protease subunit HslV (182 aa).

Threonine 6 is an active-site residue. Na(+) contacts are provided by alanine 164, cysteine 167, and threonine 170.

This sequence belongs to the peptidase T1B family. HslV subfamily. In terms of assembly, a double ring-shaped homohexamer of HslV is capped on each side by a ring-shaped HslU homohexamer. The assembly of the HslU/HslV complex is dependent on binding of ATP.

The protein localises to the cytoplasm. The catalysed reaction is ATP-dependent cleavage of peptide bonds with broad specificity.. Its activity is regulated as follows. Allosterically activated by HslU binding. Protease subunit of a proteasome-like degradation complex believed to be a general protein degrading machinery. This is ATP-dependent protease subunit HslV from Borreliella burgdorferi (strain ATCC 35210 / DSM 4680 / CIP 102532 / B31) (Borrelia burgdorferi).